We begin with the raw amino-acid sequence, 378 residues long: Ribosomal RNA large subunit methyltransferase G (378 aa).

Belongs to the methyltransferase superfamily. RlmG family.

The protein localises to the cytoplasm. The catalysed reaction is guanosine(1835) in 23S rRNA + S-adenosyl-L-methionine = N(2)-methylguanosine(1835) in 23S rRNA + S-adenosyl-L-homocysteine + H(+). Specifically methylates the guanine in position 1835 (m2G1835) of 23S rRNA. This chain is Ribosomal RNA large subunit methyltransferase G, found in Shewanella baltica (strain OS185).